The chain runs to 133 residues: Agglutinin alpha chain (133 aa).

The 133-residue stretch at 1–133 (GVTFDDGAYT…LDYFSIYLSL (133 aa)) folds into the Jacalin-type lectin domain.

This sequence belongs to the jacalin lectin family. In terms of assembly, formed of four alpha chains and four beta chains.

Its function is as follows. D-galactose-specific lectin, binds the T-antigen structure Gal-beta1,3-GalNAc. The sequence is that of Agglutinin alpha chain from Maclura pomifera (Osage orange).